The chain runs to 84 residues: uncharacterized protein (84 aa).

The segment at 1–21 (MYYRRQGEPQEMYGNGNNSVS) is disordered. A helical membrane pass occupies residues 49-69 (YIIYAIVAAILLLLFWLLYKK).

It localises to the membrane. This is an uncharacterized protein from Invertebrate iridescent virus 6 (IIV-6).